We begin with the raw amino-acid sequence, 447 residues long: Alpha-1,3-mannosyl-glycoprotein 2-beta-N-acetylglucosaminyltransferase (447 aa).

Residues 1 to 6 (MLKKQT) are Cytoplasmic-facing. The chain crosses the membrane as a helical; Signal-anchor for type II membrane protein span at residues 7–29 (AGLVLWGAIIFVGWNALLLLFFW). The Lumenal portion of the chain corresponds to 30 to 447 (TRPAPGRLPS…TWTGYDPSWN (418 aa)). A disulfide bridge links cysteine 115 with cysteine 145. Substrate-binding residues include arginine 117, aspartate 144, histidine 190, and aspartate 212. Position 213 (aspartate 213) interacts with Mn(2+). Cysteine 239 and cysteine 305 are joined by a disulfide. The active-site Proton acceptor is aspartate 291. Serine 322 is a binding site for substrate.

It belongs to the glycosyltransferase 13 family. Interacts with MGAT4D. Interacts with BRI3. Requires Mn(2+) as cofactor. As to expression, detected in kidney, liver and brain.

The protein localises to the golgi apparatus membrane. The protein resides in the cytoplasm. Its subcellular location is the perinuclear region. It carries out the reaction N(4)-(alpha-D-Man-(1-&gt;3)-[alpha-D-Man-(1-&gt;3)-[alpha-D-Man-(1-&gt;6)]-alpha-D-Man-(1-&gt;6)]-beta-D-Man-(1-&gt;4)-beta-D-GlcNAc-(1-&gt;4)-beta-D-GlcNAc)-L-asparaginyl-[protein] (N-glucan mannose isomer 5A1,2) + UDP-N-acetyl-alpha-D-glucosamine = N(4)-{beta-D-GlcNAc-(1-&gt;2)-alpha-D-Man-(1-&gt;3)-[alpha-D-Man-(1-&gt;3)-[alpha-D-Man-(1-&gt;6)]-alpha-D-Man-(1-&gt;6)]-beta-D-Man-(1-&gt;4)-beta-D-GlcNAc-(1-&gt;4)-beta-D-GlcNAc}-L-asparaginyl-[protein] + UDP + H(+). Its pathway is protein modification; protein glycosylation. Initiates complex N-linked carbohydrate formation. Essential for the conversion of high-mannose to hybrid and complex N-glycans. In Mus musculus (Mouse), this protein is Alpha-1,3-mannosyl-glycoprotein 2-beta-N-acetylglucosaminyltransferase (Mgat1).